The primary structure comprises 449 residues: Tubulin alpha-2 chain (449 aa).

Residue Gln-11 coordinates GTP. The residue at position 40 (Lys-40) is an N6-acetyllysine. GTP contacts are provided by Ser-140, Gly-144, Thr-145, Thr-179, Asn-206, and Asn-228. Glu-254 is an active-site residue.

This sequence belongs to the tubulin family. Dimer of alpha and beta chains. A typical microtubule is a hollow water-filled tube with an outer diameter of 25 nm and an inner diameter of 15 nM. Alpha-beta heterodimers associate head-to-tail to form protofilaments running lengthwise along the microtubule wall with the beta-tubulin subunit facing the microtubule plus end conferring a structural polarity. Microtubules usually have 13 protofilaments but different protofilament numbers can be found in some organisms and specialized cells. In terms of processing, acetylation of alpha chains at Lys-40 stabilizes microtubules and affects affinity and processivity of microtubule motors. This modification has a role in multiple cellular functions, ranging from cell motility, cell cycle progression or cell differentiation to intracellular trafficking and signaling.

The protein localises to the cytoplasm. It localises to the cytoskeleton. It catalyses the reaction GTP + H2O = GDP + phosphate + H(+). Its function is as follows. Tubulin is the major constituent of microtubules, a cylinder consisting of laterally associated linear protofilaments composed of alpha- and beta-tubulin heterodimers. Microtubules grow by the addition of GTP-tubulin dimers to the microtubule end, where a stabilizing cap forms. Below the cap, tubulin dimers are in GDP-bound state, owing to GTPase activity of alpha-tubulin. This is Tubulin alpha-2 chain from Stylonychia lemnae (Ciliate).